A 650-amino-acid chain; its full sequence is Epithelial sodium channel subunit gamma (650 aa).

At Met1–Leu55 the chain is on the cytoplasmic side. Residues Trp56–Phe76 form a helical membrane-spanning segment. At Ser77 to Cys542 the chain is on the extracellular side. Disulfide bonds link Cys100–Cys284, Cys208–Cys215, Cys261–Cys268, Cys373–Cys458, Cys395–Cys454, Cys399–Cys450, Cys408–Cys435, and Cys410–Cys424. The tract at residues Arg135–Ser222 is gating release of inhibition by proteolysis (GRIP); protease-sensitive region that is responsible for the proteolytic activation of the channel. Asn210 carries N-linked (GlcNAc...) asparagine glycosylation. N-linked (GlcNAc...) asparagine glycosylation is present at Asn272. Residue Asn498 is glycosylated (N-linked (GlcNAc...) asparagine). Residues Ser543 to Ala563 traverse the membrane as a helical segment. The Cytoplasmic portion of the chain corresponds to Arg564–Leu650. Residues Arg577–Tyr628 are disordered. Residues Thr579 to Asp593 show a composition bias toward polar residues. Positions Pro624–Tyr628 match the PY motif; mediates interaction, ubiquitination and inhibition by NEDD4 and NEDD4L motif. The PY motif; recruits WW domain-containing proteins and is thereby required for ubiquitination and inhibition of the channel by NEDD4 and NEDD4L signature appears at Pro624–Tyr628.

Belongs to the amiloride-sensitive sodium channel (TC 1.A.6) family. SCNN1G subfamily. In terms of assembly, component of the heterotrimeric epithelial sodium channel (ENaC) composed of an alpha/SCNN1A, a beta/SCNN1B and a gamma/SCNN1G subunit. Interacts with WWP1 (via WW domains). Interacts with WWP2 (via WW domains); inhibits the channel. Interacts with the full-length immature form of PCSK9 (pro-PCSK9); inhibits ENaC by promoting its proteasomal degradation. Interacts with BPIFA1; the interaction is indirect via SCNN1B and inhibits the proteolytic maturation of SCNN1A and SCNN1G and the activation of ENaC. Post-translationally, phosphorylated on serine and threonine residues. Aldosterone and insulin increase the basal level of phosphorylation. In terms of processing, ubiquitinated. Can be ubiquitinated at multiple sites and undergo monoubiquitination and polyubiquitination. Ubiquitination by NEDD4 or NEDD4L inhibits the ENaC channel through endocytosis, intracellular retention and degradation of its individual subunits. ENaC is activated through the proteolytic maturation of its subunits. Furin cleaves the SCNN1G subunit first, followed by cleavage by prostasin (PRSS8), which results in a stepwise increase in the open probability of the channel due to the release of an inhibitory tract. BPIFA1, which is recruited by the SCNN1B subunit, prevents the proteolytic activation of ENaC. Post-translationally, N-glycosylated. N-linked glycans are processed to complex type during ENaC complex assembly and transport to the plasma membrane.

Its subcellular location is the apical cell membrane. The catalysed reaction is Na(+)(in) = Na(+)(out). With respect to regulation, originally identified and characterized by its inhibition by the diuretic drug amiloride. Its function is as follows. This is one of the three pore-forming subunits of the heterotrimeric epithelial sodium channel (ENaC), a critical regulator of sodium balance and fluid homeostasis. ENaC operates in epithelial tissues, where it mediates the electrodiffusion of sodium ions from extracellular fluid through the apical membrane of cells, with water following osmotically. It plays a key role in maintaining sodium homeostasis through electrogenic sodium reabsorption in the kidneys. Additionally, ENaC is essential for airway surface liquid homeostasis, which is crucial for proper mucus clearance. The sequence is that of Epithelial sodium channel subunit gamma from Rattus norvegicus (Rat).